Consider the following 529-residue polypeptide: UDP-glucuronosyltransferase 2B1 (529 aa).

Residues 1–23 (MSMKQTSVFLLIQLICYFRPGAC) form the signal peptide. 2 N-linked (GlcNAc...) asparagine glycosylation sites follow: N134 and N316. Residues 494–510 (VIGFLLLCVVGVVFIIT) form a helical membrane-spanning segment.

Belongs to the UDP-glycosyltransferase family.

It localises to the endoplasmic reticulum membrane. It catalyses the reaction glucuronate acceptor + UDP-alpha-D-glucuronate = acceptor beta-D-glucuronoside + UDP + H(+). The enzyme catalyses 17beta-estradiol + UDP-alpha-D-glucuronate = 17beta-estradiol 17-O-(beta-D-glucuronate) + UDP + H(+). In terms of biological role, UDP-glucuronosyltransferase (UGT) that catalyzes phase II biotransformation reactions in which lipophilic substrates are conjugated with glucuronic acid to increase the metabolite's water solubility, thereby facilitating excretion into either the urine or bile. Essential for the elimination and detoxification of drugs, xenobiotics and endogenous compounds. Catalyzes the glucuronidation of the endogenous estrogen hormone estradiol. This Rattus norvegicus (Rat) protein is UDP-glucuronosyltransferase 2B1.